The following is an 85-amino-acid chain: Small ribosomal subunit protein bS16 (85 aa).

This sequence belongs to the bacterial ribosomal protein bS16 family.

The sequence is that of Small ribosomal subunit protein bS16 from Buchnera aphidicola subsp. Schizaphis graminum (strain Sg).